The chain runs to 421 residues: Subtilisin-like protease 2 (421 aa).

The N-terminal stretch at 1 to 16 (MQLLNFGLLLLPFVAG) is a signal peptide. The propeptide occupies 17 to 122 (DLAPQPEPLL…VHPDQHVYLA (106 aa)). The Inhibitor I9 domain occupies 36-122 (QYIVTLKEGL…VHPDQHVYLA (87 aa)). In terms of domain architecture, Peptidase S8 spans 131 to 421 (RWGLGYMSSK…ERKFTLPKYF (291 aa)). Active-site charge relay system residues include aspartate 169 and histidine 201. 3 N-linked (GlcNAc...) asparagine glycosylation sites follow: asparagine 248, asparagine 261, and asparagine 348. Catalysis depends on serine 357, which acts as the Charge relay system. Residue asparagine 388 is glycosylated (N-linked (GlcNAc...) asparagine).

This sequence belongs to the peptidase S8 family.

The protein localises to the secreted. Secreted subtilisin-like serine protease with keratinolytic activity that contributes to pathogenicity. This chain is Subtilisin-like protease 2 (SUB2), found in Trichophyton tonsurans (Scalp ringworm fungus).